The primary structure comprises 183 residues: Phosphinothricin N-acetyltransferase (183 aa).

Residues 8–169 (VEIRPATAAD…DVGFWQRDFE (162 aa)) form the N-acetyltransferase domain. Acetyl-CoA is bound by residues 91–93 (VYV), 99–104 (RLGLGS), and N130.

It belongs to the acetyltransferase family. PAT/BAR subfamily.

It carries out the reaction phosphinothricin + acetyl-CoA = N-acetylphosphinothricin + CoA + H(+). Inactivates phosphinothricin (PPT) by transfer of an acetyl group from acetyl CoA. This enzyme is an effector of phosphinothricin tripeptide (PTT or bialaphos) resistance. In Streptomyces viridochromogenes (strain DSM 40736 / JCM 4977 / BCRC 1201 / Tue 494), this protein is Phosphinothricin N-acetyltransferase.